Consider the following 593-residue polypeptide: MWTLVSWVALTAGLVAGTRCPDGQFCPVACCLDPGGASYSCCRPLLDKWPTTLSRHLGGPCQVDAHCSAGHSCIFTVSGTSSCCPFPEAVACGDGHHCCPRGFHCSADGRSCFQRSGNNSVGAIQCPDSQFECPDFSTCCVMVDGSWGCCPMPQASCCEDRVHCCPHGAFCDLVHTRCITPTGTHPLAKKLPAQRTNRAVALSSSVMCPDARSRCPDGSTCCELPSGKYGCCPMPNATCCSDHLHCCPQDTVCDLIQSKCLSKENATTDLLTKLPAHTVGDVKCDMEVSCPDGYTCCRLQSGAWGCCPFTQAVCCEDHIHCCPAGFTCDTQKGTCEQGPHQVPWMEKAPAHLSLPDPQALKRDVPCDNVSSCPSSDTCCQLTSGEWGCCPIPEAVCCSDHQHCCPQGYTCVAEGQCQRGSEIVAGLEKMPARRASLSHPRDIGCDQHTSCPVGQTCCPSLGGSWACCQLPHAVCCEDRQHCCPAGYTCNVKARSCEKEVVSAQPATFLARSPHVGVKDVECGEGHFCHDNQTCCRDNRQGWACCPYRQGVCCADRRHCCPAGFRCAARGTKCLRREAPRWDAPLRDPALRQLL.

An N-terminal signal peptide occupies residues Met1–Gly17. Asn118 is a glycosylation site (N-linked (GlcNAc...) asparagine). Cystine bridges form between Cys126-Cys139 and Cys133-Cys149. N-linked (GlcNAc...) asparagine glycans are attached at residues Asn236 and Asn265. Disulfide bonds link Cys284/Cys296, Cys290/Cys306, Cys297/Cys314, Cys307/Cys321, Cys315/Cys328, Cys322/Cys335, Cys366/Cys378, Cys372/Cys388, Cys397/Cys410, and Cys404/Cys416. N-linked (GlcNAc...) asparagine glycosylation is present at Asn368. A glycan (N-linked (GlcNAc...) asparagine) is linked at Asn530.

The protein belongs to the granulin family. As to quaternary structure, progranulin is secreted as a homodimer. Interacts with SLPI; interaction protects progranulin from proteolysis. Interacts (via region corresponding to granulin-7 peptide) with CTSD; stabilizes CTSD and increases its proteolytic activity. Interacts (via region corresponding to granulin-7 peptide) with SORT1; this interaction mediates endocytosis and lysosome delivery of progranulin; interaction occurs at the neuronal cell surface in a stressed nervous system. Interacts with PSAP; facilitates lysosomal delivery of progranulin from the extracellular space and the biosynthetic pathway. Forms a complex with PSAP and M6PR; PSAP bridges the binding between progranulin and M6PR. Forms a complex with PSAP and SORT1; progranulin bridges the interaction between PSAP and SORT1; facilitates lysosomal targeting of PSAP via SORT1; interaction enhances PSAP uptake in primary cortical neurons. Interacts (via regions corresponding to granulin-2 and granulin-7 peptides) with GBA1; this interaction prevents aggregation of GBA1-SCARB2 complex via interaction with HSPA1A upon stress. Interacts (via region corresponding to granulin-7 peptide) with HSPA1A; mediates recruitment of HSPA1A to GBA1 and prevents GBA1 aggregation in response to stress. Post-translationally, cleaved by ELANE; proteolysis is blocked by SLPI and is concentration- and time-dependent and induces CXCL8/IL-8 production; granulin-3 and granulin-4 are resistant to ELANE. Cleaved by CTSL in lysosome thus regulating the maturation and turnover of progranulin within the lysosome. In terms of tissue distribution, in myelogenous leukemic cell lines of promonocytic, promyelocytic, and proerythroid lineage, in fibroblasts, and very strongly in epithelial cell lines. Present in inflammatory cells and bone marrow. Highest levels in kidney.

The protein resides in the secreted. It is found in the lysosome. Functionally, secreted protein that acts as a key regulator of lysosomal function and as a growth factor involved in inflammation, wound healing and cell proliferation. Regulates protein trafficking to lysosomes, and also the activity of lysosomal enzymes. Also facilitates the acidification of lysosomes, causing degradation of mature CTSD by CTSB. In addition, functions as a wound-related growth factor that acts directly on dermal fibroblasts and endothelial cells to promote division, migration and the formation of capillary-like tubule structures. Also promotes epithelial cell proliferation by blocking TNF-mediated neutrophil activation preventing release of oxidants and proteases. Moreover, modulates inflammation in neurons by preserving neurons survival, axonal outgrowth and neuronal integrity. In terms of biological role, promotes proliferation of the epithelial cell line A431 in culture. Its function is as follows. Inhibits epithelial cell proliferation and induces epithelial cells to secrete IL-8. Stabilizes CTSD through interaction with CTSD leading to maintain its aspartic-type peptidase activity. The sequence is that of Progranulin from Homo sapiens (Human).